Consider the following 337-residue polypeptide: C5a anaphylatoxin chemotactic receptor 2 (337 aa).

Residues 1–38 are Extracellular-facing; it reads MGNDSVSYEYGDYSDLSDRPVDCLDGACLAIDPLRVAP. Residue Asn-3 is glycosylated (N-linked (GlcNAc...) asparagine). A helical transmembrane segment spans residues 39–61; the sequence is LPLYAAIFLVGVPGNAMVAWVAG. Residues 62–72 are Cytoplasmic-facing; the sequence is KVARRRVGATW. The chain crosses the membrane as a helical span at residues 73–95; that stretch reads LLHLAVADLLCCLSLPILAVPIA. Residues 96–114 lie on the Extracellular side of the membrane; that stretch reads RGGHWPYGAVGCRALPSII. A disulfide bridge connects residues Cys-107 and Cys-186. Residues 115–137 form a helical membrane-spanning segment; that stretch reads LLTMYASVLLLAALSADLCFLAL. The Cytoplasmic portion of the chain corresponds to 138–149; sequence GPAWWSTVQRAC. A helical transmembrane segment spans residues 150 to 172; it reads GVQVACGAAWTLALLLTVPSAIY. The Extracellular portion of the chain corresponds to 173–202; it reads RRLHQEHFPARLQCVVDYGGSSSTENAVTA. A helical transmembrane segment spans residues 203–225; sequence IRFLFGFLGPLVAVASCHSALLC. At 226–237 the chain is on the cytoplasmic side; the sequence is WAARRCRPLGTA. The helical transmembrane segment at 238–260 threads the bilayer; the sequence is IVVGFFVCWAPYHLLGLVLTVAA. The Extracellular portion of the chain corresponds to 261-274; sequence PNSALLARALRAEP. The chain crosses the membrane as a helical span at residues 275–294; it reads LIVGLALAHSCLNPMLFLYF. Residues 295–337 lie on the Cytoplasmic side of the membrane; the sequence is GRAQLRRSLPAACHWALRESQGQDESVDSKKSTSHDLVSEMEV. A Phosphoserine modification is found at Ser-320.

The protein belongs to the G-protein coupled receptor 1 family. In terms of assembly, interacts with C3 (the anaphylatoxin peptide C3a and the adipogenic hormone ASP); the interaction occurs with higher affinity for ASP, enhancing the phosphorylation and activation of GPR77, recruitment of ARRB2 to the cell surface and endocytosis of GRP77. Frontal cortex, hippocampus, hypothalamus, pons and liver.

The protein localises to the cell membrane. Its function is as follows. Receptor for the chemotactic and inflammatory C3a, C4a and C5a anaphylatoxin peptides and also for their dearginated forms ASP/C3adesArg, C4adesArg and C5adesArg respectively. Couples weakly to G(i)-mediated signaling pathways. The polypeptide is C5a anaphylatoxin chemotactic receptor 2 (C5AR2) (Homo sapiens (Human)).